The primary structure comprises 77 residues: Acyl carrier protein (77 aa).

Positions 2–77 (ADTLSRITKI…DVVEYIEGRQ (76 aa)) constitute a Carrier domain. At serine 37 the chain carries O-(pantetheine 4'-phosphoryl)serine.

The protein belongs to the acyl carrier protein (ACP) family. 4'-phosphopantetheine is transferred from CoA to a specific serine of apo-ACP by AcpS. This modification is essential for activity because fatty acids are bound in thioester linkage to the sulfhydryl of the prosthetic group.

The protein resides in the cytoplasm. It functions in the pathway lipid metabolism; fatty acid biosynthesis. Functionally, carrier of the growing fatty acid chain in fatty acid biosynthesis. This is Acyl carrier protein from Halalkalibacterium halodurans (strain ATCC BAA-125 / DSM 18197 / FERM 7344 / JCM 9153 / C-125) (Bacillus halodurans).